A 62-amino-acid polypeptide reads, in one-letter code: Photosystem II reaction center protein Z (62 aa).

A run of 2 helical transmembrane segments spans residues alanine 8–alanine 28 and phenylalanine 41–isoleucine 61.

It belongs to the PsbZ family. In terms of assembly, PSII is composed of 1 copy each of membrane proteins PsbA, PsbB, PsbC, PsbD, PsbE, PsbF, PsbH, PsbI, PsbJ, PsbK, PsbL, PsbM, PsbT, PsbY, PsbZ, Psb30/Ycf12, at least 3 peripheral proteins of the oxygen-evolving complex and a large number of cofactors. It forms dimeric complexes.

It localises to the plastid. Its subcellular location is the chloroplast thylakoid membrane. Its function is as follows. May control the interaction of photosystem II (PSII) cores with the light-harvesting antenna, regulates electron flow through the 2 photosystem reaction centers. PSII is a light-driven water plastoquinone oxidoreductase, using light energy to abstract electrons from H(2)O, generating a proton gradient subsequently used for ATP formation. This Oryza nivara (Indian wild rice) protein is Photosystem II reaction center protein Z.